A 520-amino-acid chain; its full sequence is Glutamate--cysteine ligase (520 aa).

Belongs to the glutamate--cysteine ligase type 1 family. Type 1 subfamily.

It catalyses the reaction L-cysteine + L-glutamate + ATP = gamma-L-glutamyl-L-cysteine + ADP + phosphate + H(+). Its pathway is sulfur metabolism; glutathione biosynthesis; glutathione from L-cysteine and L-glutamate: step 1/2. The sequence is that of Glutamate--cysteine ligase from Leptospira interrogans serogroup Icterohaemorrhagiae serovar copenhageni (strain Fiocruz L1-130).